A 168-amino-acid chain; its full sequence is Zinc finger A20 and AN1 domain-containing stress-associated protein 1 (168 aa).

Residues 13–47 (PSEPKLCVKGCGFFGSPSNMNLCSKCYRDIRATEE) form an A20-type zinc finger. Residues cysteine 19, cysteine 23, cysteine 35, and cysteine 38 each coordinate Zn(2+). The disordered stretch occupies residues 49 to 105 (TASAKAAVEKSLNPNKPKTQPQQSQEITQGVLGSGSSSSSTRGGDSAAAPLDPPKST). Polar residues predominate over residues 60-76 (LNPNKPKTQPQQSQEIT). The span at 82 to 94 (SGSSSSSTRGGDS) shows a compositional bias: low complexity. The AN1-type zinc-finger motif lies at 103–149 (KSTATRCLSCNKKVGVTGFKCRCGSTFCGTHRYPESHECQFDFKGVA). Positions 109, 112, 123, 125, 130, 133, 139, and 141 each coordinate Zn(2+).

May be involved in environmental stress response. This is Zinc finger A20 and AN1 domain-containing stress-associated protein 1 (SAP1) from Arabidopsis thaliana (Mouse-ear cress).